A 445-amino-acid chain; its full sequence is Tubulin beta-2 chain (445 aa).

GTP is bound by residues Gln-11, Glu-69, Ser-138, Gly-142, Thr-143, Gly-144, Asn-204, and Asn-226. Glu-69 is a Mg(2+) binding site. Residues Gln-424–Ala-445 are disordered. Residues Thr-429–Ala-445 show a composition bias toward acidic residues.

It belongs to the tubulin family. Dimer of alpha and beta chains. A typical microtubule is a hollow water-filled tube with an outer diameter of 25 nm and an inner diameter of 15 nM. Alpha-beta heterodimers associate head-to-tail to form protofilaments running lengthwise along the microtubule wall with the beta-tubulin subunit facing the microtubule plus end conferring a structural polarity. Microtubules usually have 13 protofilaments but different protofilament numbers can be found in some organisms and specialized cells. It depends on Mg(2+) as a cofactor.

It is found in the cytoplasm. Its subcellular location is the cytoskeleton. In terms of biological role, tubulin is the major constituent of microtubules, a cylinder consisting of laterally associated linear protofilaments composed of alpha- and beta-tubulin heterodimers. Microtubules grow by the addition of GTP-tubulin dimers to the microtubule end, where a stabilizing cap forms. Below the cap, tubulin dimers are in GDP-bound state, owing to GTPase activity of alpha-tubulin. The polypeptide is Tubulin beta-2 chain (TUB-2) (Echinococcus multilocularis (Fox tapeworm)).